Reading from the N-terminus, the 479-residue chain is Poly(A) polymerase catalytic subunit (479 aa).

Residues Asp-202 and Asp-204 contribute to the active site. Ca(2+)-binding residues include Asp-202, Asp-204, and Asp-253.

The protein belongs to the poxviridae poly(A) polymerase catalytic subunit family. As to quaternary structure, heterodimer of a large (catalytic) subunit and a small (regulatory) subunit.

The enzyme catalyses RNA(n) + ATP = RNA(n)-3'-adenine ribonucleotide + diphosphate. Functionally, polymerase that creates the 3'-poly(A) tail of mRNA's. This Mus musculus (Mouse) protein is Poly(A) polymerase catalytic subunit (OPG063).